The primary structure comprises 282 residues: Nucleotide-binding protein Shew_3314 (282 aa).

Position 8–15 (8–15 (GRSGSGKS)) interacts with ATP. 56–59 (DVRN) serves as a coordination point for GTP.

Belongs to the RapZ-like family.

Its function is as follows. Displays ATPase and GTPase activities. In Shewanella loihica (strain ATCC BAA-1088 / PV-4), this protein is Nucleotide-binding protein Shew_3314.